The sequence spans 295 residues: Cuticle collagen 3A3 (295 aa).

Residues 81–278 (AITSSEENGG…GRPGEPGICP (198 aa)) form a disordered region. 2 stretches are compositionally biased toward pro residues: residues 97 to 109 (PGPPGPPGPPGRP) and 146 to 160 (AGPPGPPGKPGPPGD). Triple-helical region regions lie at residues 98-127 (GPPGPPGPPGRPGRPGRPGAPGLPGVPGLP), 147-203 (GPPG…VGED), and 212-277 (GDQG…PGIC). A compositionally biased stretch (low complexity) spans 172-182 (QDGIPGQQGTK). Residues 217–228 (PGEPGPEGPPGE) show a composition bias toward pro residues. The segment covering 229–244 (PGLQGPVGMPGQVGQK) has biased composition (low complexity). Pro residues predominate over residues 261-271 (RPGPPGPPGRP).

It belongs to the cuticular collagen family.

Functionally, nematode cuticles are composed largely of collagen-like proteins. The cuticle functions both as an exoskeleton and as a barrier to protect the worm from its environment. The sequence is that of Cuticle collagen 3A3 (3A3) from Haemonchus contortus (Barber pole worm).